Reading from the N-terminus, the 291-residue chain is 4-hydroxy-tetrahydrodipicolinate synthase (291 aa).

T42 contributes to the pyruvate binding site. The active-site Proton donor/acceptor is the Y129. The active-site Schiff-base intermediate with substrate is the K157. Pyruvate is bound at residue I198.

The protein belongs to the DapA family. As to quaternary structure, homotetramer; dimer of dimers.

It is found in the cytoplasm. The catalysed reaction is L-aspartate 4-semialdehyde + pyruvate = (2S,4S)-4-hydroxy-2,3,4,5-tetrahydrodipicolinate + H2O + H(+). It participates in amino-acid biosynthesis; L-lysine biosynthesis via DAP pathway; (S)-tetrahydrodipicolinate from L-aspartate: step 3/4. Catalyzes the condensation of (S)-aspartate-beta-semialdehyde [(S)-ASA] and pyruvate to 4-hydroxy-tetrahydrodipicolinate (HTPA). The polypeptide is 4-hydroxy-tetrahydrodipicolinate synthase (Chlamydia pneumoniae (Chlamydophila pneumoniae)).